The chain runs to 393 residues: Acetate kinase (393 aa).

Asparagine 10 contacts Mg(2+). An ATP-binding site is contributed by lysine 17. Substrate is bound at residue arginine 89. Aspartate 146 (proton donor/acceptor) is an active-site residue. ATP-binding positions include 204–208 (HLGNG), 278–280 (DMR), and 323–327 (GVGEN). Glutamate 376 is a binding site for Mg(2+).

This sequence belongs to the acetokinase family. Homodimer. Mg(2+) is required as a cofactor. Requires Mn(2+) as cofactor.

Its subcellular location is the cytoplasm. The catalysed reaction is acetate + ATP = acetyl phosphate + ADP. It functions in the pathway metabolic intermediate biosynthesis; acetyl-CoA biosynthesis; acetyl-CoA from acetate: step 1/2. Functionally, catalyzes the formation of acetyl phosphate from acetate and ATP. Can also catalyze the reverse reaction. This chain is Acetate kinase, found in Mycoplasma genitalium (strain ATCC 33530 / DSM 19775 / NCTC 10195 / G37) (Mycoplasmoides genitalium).